The chain runs to 690 residues: Glycine--tRNA ligase beta subunit (690 aa).

Belongs to the class-II aminoacyl-tRNA synthetase family. Tetramer of two alpha and two beta subunits.

It localises to the cytoplasm. It carries out the reaction tRNA(Gly) + glycine + ATP = glycyl-tRNA(Gly) + AMP + diphosphate. This chain is Glycine--tRNA ligase beta subunit, found in Desulfitobacterium hafniense (strain DSM 10664 / DCB-2).